Consider the following 292-residue polypeptide: ATP synthase gamma chain (292 aa).

The protein belongs to the ATPase gamma chain family. In terms of assembly, F-type ATPases have 2 components, CF(1) - the catalytic core - and CF(0) - the membrane proton channel. CF(1) has five subunits: alpha(3), beta(3), gamma(1), delta(1), epsilon(1). CF(0) has three main subunits: a, b and c.

Its subcellular location is the cell membrane. Its function is as follows. Produces ATP from ADP in the presence of a proton gradient across the membrane. The gamma chain is believed to be important in regulating ATPase activity and the flow of protons through the CF(0) complex. The sequence is that of ATP synthase gamma chain from Streptococcus suis (strain 05ZYH33).